The sequence spans 244 residues: CTD nuclear envelope phosphatase 1 (244 aa).

Residues 7–29 (LLGLRGFVAFAAKLWSFVLYLLR) form a helical membrane-spanning segment. Residues 58 to 225 (QVKRKVLVLD…NLLPMLDALR (168 aa)) enclose the FCP1 homology domain.

This sequence belongs to the dullard family. As to quaternary structure, interacts with bmpr1a, bmpr1b and bmpr2.

It is found in the membrane. Its subcellular location is the cytoplasm. It localises to the perinuclear region. It catalyses the reaction O-phospho-L-seryl-[protein] + H2O = L-seryl-[protein] + phosphate. The enzyme catalyses O-phospho-L-threonyl-[protein] + H2O = L-threonyl-[protein] + phosphate. Functionally, serine/threonine protein phosphatase that may dephosphorylate and activate lipins. Lipins are phosphatidate phosphatases that catalyze the conversion of phosphatidic acid to diacylglycerol and control the metabolism of fatty acids at different levels. May indirectly modulate the lipid composition of nuclear and/or endoplasmic reticulum membranes and be required for proper nuclear membrane morphology and/or dynamics. May also indirectly regulate the production of lipid droplets and triacylglycerol. Induces neuronal differentiation by antagonizing BMP signaling. Acts both by dephosphorylating BMPR1A and by promoting BMPR2 proteasomal degradation. The chain is CTD nuclear envelope phosphatase 1 (ctdnep1) from Xenopus laevis (African clawed frog).